The chain runs to 539 residues: Chaperone Ric-8A (539 aa).

A disordered region spans residues 506–539 (PMGVTSDGRLGPLDEAAQKMLQRQESSDLDSDSD).

It belongs to the synembryn family.

It is found in the cytoplasm. Its subcellular location is the cell cortex. Chaperone that specifically binds and folds nascent G alpha proteins prior to G protein heterotrimer formation, promoting their stability and activity: folds GNAI1, GNAO1, GNA13 and GNAQ. Does not fold G(s) G-alpha proteins GNAS nor GNAL. Also acts as a guanine nucleotide exchange factor (GEF) for G alpha proteins by stimulating exchange of bound GDP for free GTP. The polypeptide is Chaperone Ric-8A (ric8a) (Xenopus laevis (African clawed frog)).